The following is a 411-amino-acid chain: Tyrosine--tRNA ligase (411 aa).

Residue Tyr-34 participates in L-tyrosine binding. A 'HIGH' region motif is present at residues 39-48; it reads CTATSLHIGS. Positions 171 and 175 each coordinate L-tyrosine. The short motif at 231–235 is the 'KMSKS' region element; it reads KMGKT. Lys-234 serves as a coordination point for ATP. The 67-residue stretch at 345 to 411 folds into the S4 RNA-binding domain; it reads ISAYELFHEA…GKKRHILVRV (67 aa).

Belongs to the class-I aminoacyl-tRNA synthetase family. TyrS type 1 subfamily. In terms of assembly, homodimer.

It is found in the cytoplasm. It carries out the reaction tRNA(Tyr) + L-tyrosine + ATP = L-tyrosyl-tRNA(Tyr) + AMP + diphosphate + H(+). Catalyzes the attachment of tyrosine to tRNA(Tyr) in a two-step reaction: tyrosine is first activated by ATP to form Tyr-AMP and then transferred to the acceptor end of tRNA(Tyr). The sequence is that of Tyrosine--tRNA ligase from Rickettsia massiliae (strain Mtu5).